Here is a 49-residue protein sequence, read N- to C-terminus: MRVNITLECTSCHERTYLTSKNRRNNPDRLELNKYCPREHKVVLHRETK.

It belongs to the bacterial ribosomal protein bL33 family.

This is Large ribosomal subunit protein bL33B from Limosilactobacillus fermentum (strain NBRC 3956 / LMG 18251) (Lactobacillus fermentum).